A 485-amino-acid chain; its full sequence is Cysteine--tRNA ligase (485 aa).

C27 serves as a coordination point for Zn(2+). Residues 29 to 39 (ITAYDLCHLGH) carry the 'HIGH' region motif. Residues C208, H233, and E237 each coordinate Zn(2+). The 'KMSKS' region signature appears at 265 to 269 (KMSKS). K268 contacts ATP.

This sequence belongs to the class-I aminoacyl-tRNA synthetase family. As to quaternary structure, monomer. It depends on Zn(2+) as a cofactor.

It localises to the cytoplasm. It carries out the reaction tRNA(Cys) + L-cysteine + ATP = L-cysteinyl-tRNA(Cys) + AMP + diphosphate. This Oleidesulfovibrio alaskensis (strain ATCC BAA-1058 / DSM 17464 / G20) (Desulfovibrio alaskensis) protein is Cysteine--tRNA ligase.